A 459-amino-acid polypeptide reads, in one-letter code: ATP-dependent protease ATPase subunit HslU (459 aa).

ATP contacts are provided by residues Val-26, 68–73 (GVGKTE), Asp-271, Glu-337, and Arg-409.

It belongs to the ClpX chaperone family. HslU subfamily. A double ring-shaped homohexamer of HslV is capped on each side by a ring-shaped HslU homohexamer. The assembly of the HslU/HslV complex is dependent on binding of ATP.

The protein resides in the cytoplasm. ATPase subunit of a proteasome-like degradation complex; this subunit has chaperone activity. The binding of ATP and its subsequent hydrolysis by HslU are essential for unfolding of protein substrates subsequently hydrolyzed by HslV. HslU recognizes the N-terminal part of its protein substrates and unfolds these before they are guided to HslV for hydrolysis. In Xylella fastidiosa (strain 9a5c), this protein is ATP-dependent protease ATPase subunit HslU.